The sequence spans 312 residues: Very-long-chain 3-oxoacyl-CoA reductase (312 aa).

3 helical membrane passes run 33–53 (VWGI…WAVV), 181–201 (GVIL…LTLY), and 274–294 (HAFM…NLLM). 48-77 (GAWAVVTGATDGIGKAYAKELAKRGMKVAL) is an NADP(+) binding site. A substrate-binding site is contributed by S188. Y201 functions as the Proton acceptor in the catalytic mechanism.

The protein belongs to the short-chain dehydrogenases/reductases (SDR) family. 17-beta-HSD 3 subfamily. As to expression, brain.

It is found in the endoplasmic reticulum membrane. It catalyses the reaction a very-long-chain (3R)-3-hydroxyacyl-CoA + NADP(+) = a very-long-chain 3-oxoacyl-CoA + NADPH + H(+). It carries out the reaction 17beta-estradiol + NAD(+) = estrone + NADH + H(+). The catalysed reaction is 17beta-estradiol + NADP(+) = estrone + NADPH + H(+). The enzyme catalyses 3-oxooctadecanoyl-CoA + NADPH + H(+) = (3R)-hydroxyoctadecanoyl-CoA + NADP(+). It catalyses the reaction (7Z,10Z,13Z,16Z)-3-oxodocosatetraenoyl-CoA + NADPH + H(+) = (3R)-hydroxy-(7Z,10Z,13Z,16Z)-docosatetraenoyl-CoA + NADP(+). It carries out the reaction 3-oxo-(7Z,10Z,13Z,16Z,19Z)-docosapentaenoyl-CoA + NADPH + H(+) = (3R)-hydroxy-(7Z,10Z,13Z,16Z,19Z)-docosapentaenoyl-CoA + NADP(+). The catalysed reaction is (8Z,11Z,14Z)-3-oxoeicosatrienoyl-CoA + NADPH + H(+) = (3R)-hydroxy-(8Z,11Z,14Z)-eicosatrienoyl-CoA + NADP(+). Its pathway is lipid metabolism; fatty acid biosynthesis. It functions in the pathway steroid biosynthesis; estrogen biosynthesis. In terms of biological role, catalyzes the second of the four reactions of the long-chain fatty acids elongation cycle. This endoplasmic reticulum-bound enzymatic process, allows the addition of two carbons to the chain of long- and very long-chain fatty acids/VLCFAs per cycle. This enzyme has a 3-ketoacyl-CoA reductase activity, reducing 3-ketoacyl-CoA to 3-hydroxyacyl-CoA, within each cycle of fatty acid elongation. Thereby, it may participate in the production of VLCFAs of different chain lengths that are involved in multiple biological processes as precursors of membrane lipids and lipid mediators. May also catalyze the transformation of estrone (E1) into estradiol (E2) and play a role in estrogen formation. This Anas platyrhynchos (Mallard) protein is Very-long-chain 3-oxoacyl-CoA reductase (HSD17B12).